The chain runs to 155 residues: uncharacterized protein (155 aa).

The disordered stretch occupies residues 135–155; that stretch reads SQANSKNDSNSKDDLPNPFSV.

This is an uncharacterized protein from Acidianus convivator (ATV).